A 121-amino-acid chain; its full sequence is Protein VraC (121 aa).

In Staphylococcus aureus (strain Mu3 / ATCC 700698), this protein is Protein VraC (vraC).